A 184-amino-acid polypeptide reads, in one-letter code: Ribosome-recycling factor (184 aa).

It belongs to the RRF family.

It is found in the cytoplasm. Responsible for the release of ribosomes from messenger RNA at the termination of protein biosynthesis. May increase the efficiency of translation by recycling ribosomes from one round of translation to another. This is Ribosome-recycling factor from Psychrobacter arcticus (strain DSM 17307 / VKM B-2377 / 273-4).